The sequence spans 652 residues: Aorsin (652 aa).

The first 22 residues, 1-22 (MRPLSHLSFFNGLLLGLSALSA), serve as a signal peptide directing secretion. Positions 23–215 (ATSVVHERRE…PRPIQQHDVK (193 aa)) are cleaved as a propeptide — removed in mature form. Residue Asn112 is glycosylated (N-linked (GlcNAc...) asparagine). The disordered stretch occupies residues 177–211 (VNLNPSSGKPSSIRRRAAASKKTKLPARGPRPIQQ). Positions 188–201 (SIRRRAAASKKTKL) are enriched in basic residues. Residues Asn218 and Asn247 are each glycosylated (N-linked (GlcNAc...) asparagine). The 427-residue stretch at 225–651 (LITPECIRAL…PKMLKLWLDL (427 aa)) folds into the Peptidase S53 domain. Catalysis depends on charge relay system residues Glu301 and Asp305. 2 N-linked (GlcNAc...) asparagine glycosylation sites follow: Asn331 and Asn445. The Charge relay system role is filled by Ser569. Ca(2+) contacts are provided by Asp610 and Ile611. N-linked (GlcNAc...) asparagine glycosylation is present at Asn613. Residues Gly629 and Asp631 each contribute to the Ca(2+) site.

It depends on Ca(2+) as a cofactor. N-glycosylated. In terms of processing, O-glycosylated.

The protein resides in the secreted. It is found in the extracellular space. Its activity is regulated as follows. Inhibited by antipain and leupeptin. Its function is as follows. Serine endopeptidase which hydrolyzes a range of fluorogenic peptide substrates containing the basic residues arginine or lysine at the P1 position and prefers paired basic resides. Also hydrolyzes clupeine and salmine, activates plasminogen and converts trypsinogen to trypsin. The sequence is that of Aorsin from Aspergillus oryzae (strain ATCC 42149 / RIB 40) (Yellow koji mold).